The primary structure comprises 161 residues: Myosin regulatory light chain A, smooth adductor muscle (161 aa).

A1 is modified (blocked amino end (Ala)). EF-hand domains lie at 20 to 55 and 89 to 124; these read KLMQ…LGRT and DTEE…MGDN. D33, N35, D37, and D44 together coordinate Ca(2+).

In terms of biological role, in molluscan muscle, calcium regulation is associated with myosin rather than with actin. Muscle myosin contains two types of light chains: the catalytic light chain, essential for ATPase activity, and the regulatory light chain, a calcium-binding protein responsible for Ca(2+) dependent binding and Ca(2+) dependent Mg-ATPase activity. In Mizuhopecten yessoensis (Japanese scallop), this protein is Myosin regulatory light chain A, smooth adductor muscle.